The following is a 176-amino-acid chain: MALDLLVVSAGSLALKVLRVTPLITTTILLVNRLAQYFALSTFLPPHTSPKKIDHVGAAFQHWLQTVVPRVWTGVISIVLFTRVALILNLFVRPDDLAGSNARFLYGVGLFLSFAHLSVAPKMLKFEKRMMSPETVPHVAMELLAGWMKVNNIRFWIVDVPFWVVGVWATLEGLKA.

4 consecutive transmembrane segments (helical) span residues 5 to 25 (LLVVSAGSLALKVLRVTPLIT), 71 to 91 (VWTGVISIVLFTRVALILNLF), 104 to 124 (FLYGVGLFLSFAHLSVAPKML), and 155 to 175 (FWIVDVPFWVVGVWATLEGLK).

Its subcellular location is the membrane. It participates in secondary metabolite biosynthesis. In terms of biological role, part of the gene cluster that mediates the biosynthesis of oxaleimides, cytotoxic compounds containing an unusual disubstituted succinimide moiety. The first step of the pathway is provided by the HR-PKS poxF that serves in a new mode of collaborative biosynthesis with the PKS-NRPS poxE, by providing the olefin containing amino acid substrate via the synthesis of an ACP-bound dec-4-enoate. The cytochrome P450 monooxygenase poxM-catalyzed oxidation at the alpha-position creates the enzyme-bound 2-hydroxydec-4-enoyl-ACP thioester, which may be prone to spontaneous hydrolysis to yield 2-hydroxydec-4-enoic acid due to increased electrophilicity of the carbonyl. 2-hydroxydec-4-enoic acid can then be further oxidized by poxM to yield the alpha-ketoacid 2-oxodec-4-enoicacid, which is reductively aminated by the aminotransferase poxL to yield (S,E)-2-aminodec-4-enoic acid. The Hybrid PKS-NRPS synthetase poxE then performs condensation between the octaketide product of its PKS modules and the amino group of (S,E)-2-aminodec-4-enoic acid which is activated and incorporated by the adenylation domain. The resulting aminoacyl product can be cyclized by the Diels-Alderase PoxQ and reductively released by the reductive (R) domain of poxE to yield an aldehyde intermediate. The released aldehyde is then substrate for a Knoevenagel condensation by the hydrolyase poxO followed by an oxidation at the 5-position of the pyrrolidone ring. The presence of the olefin from the amino acid building block allows for migration of the substituted allyl group to occur. This allylic transposition reaction takes place in a conjugate addition, semipinacol-like fashion to yield a succinimide intermediate. Iterative two-electron oxidations of the C7 methyl of the succinimide intermediate to the carboxylic acid can be catalyzed by one of two remaining cytochrome P450 monooxygenasess poxC or poxD to yield oxaleimide A. Subsequent oxidation yields the maleimide scaffold oxaleimide I. Both oxaleimide A and oxaleimide I can undergo oxidative modifications in the decalin ring to yield the series of products oxaleimides B to H. This chain is Oxaleimides biosynthesis cluster protein N, found in Penicillium oxalicum (strain 114-2 / CGMCC 5302) (Penicillium decumbens).